Here is a 594-residue protein sequence, read N- to C-terminus: MLPRTKYNRFRNDSVTSVDDLLHSLSVSGGGGKVSAARATPAAAPYLVSGEALRKAPDDGPGSLGHLLHKVSHLKLSSSGLRGLSSAARERAGARLSGSCSAPSLAAPDGSAPSAPRAPAMSAARKGRPGDEPLPRPPRGAPHASDQVLGPGVTYVVKYLGCIEVLRSMRSLDFSTRTQITREAISRVCEAVPGAKGAFKKRKPPSKMLSSILGKSNLQFAGMSISLTISTASLNLRTPDSKQIIANHHMRSISFASGGDPDTTDYVAYVAKDPVNRRACHILECCDGLAQDVIGSIGQAFELRFKQYLQCPTKIPALHDRMQSLDEPWTEEEGDGSDHPYYNSIPSKMPPPGGFLDTRLKPRPHAPDTAQFAGKEQTYYQGRHLGDTFGEDWQQTPLRQGSSDIYSTPEGKLHVAPTGEAPTYVNTQQIPPQAWPAAVSSAESSPRKDLFDMKPFEDALKNQPLGPVLSKAASVECISPVSPRAPDAKMLEELQAETWYQGEMSRKEAEGLLEKDGDFLVRKSTTNPGSFVLTGMHNGQAKHLLLVDPEGTIRTKDRVFDSISHLINHHLESSLPIVSAGSELCLQQPVERKQ.

The disordered stretch occupies residues glycine 98 to glutamine 147. Residues serine 101–alanine 124 are compositionally biased toward low complexity. Positions leucine 149–glycine 334 constitute a PID domain. The tract at residues aspartate 335–threonine 498 is CH1. Disordered regions lie at residues proline 351–alanine 373 and glycine 386–isoleucine 405. A compositionally biased stretch (polar residues) spans tryptophan 393 to isoleucine 405. Serine 402 is modified (phosphoserine). The SH2 domain occupies tryptophan 499–valine 590.

In terms of assembly, interacts with the Trk receptors in a phosphotyrosine-dependent manner. Once activated, binds to GRB2. Interacts with activated EGF receptors. In terms of processing, tyrosine phosphorylated. In terms of tissue distribution, mainly expressed in brain. Hardly detectable in other tissues, except in pancreas. Highly expressed in the cerebral cortex, frontal and temporal lobes, occipital pole, hippocampus, caudate nucleus and amygdala. Expressed at low level in the cerebellum, medulla and spinal cord.

Signaling adapter that couples activated growth factor receptors to signaling pathway in neurons. Involved in the signal transduction pathways of neurotrophin-activated Trk receptors in cortical neurons. This Homo sapiens (Human) protein is SHC-transforming protein 3 (SHC3).